Consider the following 209-residue polypeptide: Max dimerization protein 4 (209 aa).

An interaction with SIN3A and SIN3B region spans residues 6-23 (LLLLLEAAEYLERRDREA). Residues 53–105 (NNRSSHNELEKHRRAKLRLYLEQLKQLGPLGPDSTRHTTLSLLKRAKMHIKKL) enclose the bHLH domain. The segment at 137 to 209 (SVERVRTDST…CRRPGCPGLS (73 aa)) is disordered. Residues 153–163 (DDSEQEVDIEG) show a composition bias toward acidic residues. The span at 185-195 (SLQSSGCSDSS) shows a compositional bias: polar residues.

Efficient DNA binding requires dimerization with another bHLH protein. Binds DNA as a heterodimer with MAX. Interacts with SIN3A AND SIN3B. Interacts with RNF17.

It localises to the nucleus. Transcriptional repressor. Binds with MAX to form a sequence-specific DNA-binding protein complex which recognizes the core sequence 5'-CAC[GA]TG-3'. Antagonizes MYC transcriptional activity by competing for MAX and suppresses MYC dependent cell transformation. The chain is Max dimerization protein 4 (Mxd4) from Mus musculus (Mouse).